Here is a 338-residue protein sequence, read N- to C-terminus: Large ribosomal subunit protein uL3 (338 aa).

Over residues 228 to 237 (HKHRKGHRRT) the composition is skewed to basic residues. The segment at 228–255 (HKHRKGHRRTGTIGPQAPALMFTQPRPG) is disordered.

The protein belongs to the universal ribosomal protein uL3 family. Part of the 50S ribosomal subunit. Forms a cluster with proteins L14 and L24e.

Functionally, one of the primary rRNA binding proteins, it binds directly near the 3'-end of the 23S rRNA, where it nucleates assembly of the 50S subunit. The sequence is that of Large ribosomal subunit protein uL3 from Pyrobaculum calidifontis (strain DSM 21063 / JCM 11548 / VA1).